The chain runs to 202 residues: Crossover junction endodeoxyribonuclease RuvC (202 aa).

Residues aspartate 7, glutamate 68, and aspartate 141 contribute to the active site. Mg(2+)-binding residues include aspartate 7, glutamate 68, and aspartate 141.

This sequence belongs to the RuvC family. Homodimer which binds Holliday junction (HJ) DNA. The HJ becomes 2-fold symmetrical on binding to RuvC with unstacked arms; it has a different conformation from HJ DNA in complex with RuvA. In the full resolvosome a probable DNA-RuvA(4)-RuvB(12)-RuvC(2) complex forms which resolves the HJ. Mg(2+) is required as a cofactor.

Its subcellular location is the cytoplasm. It carries out the reaction Endonucleolytic cleavage at a junction such as a reciprocal single-stranded crossover between two homologous DNA duplexes (Holliday junction).. The RuvA-RuvB-RuvC complex processes Holliday junction (HJ) DNA during genetic recombination and DNA repair. Endonuclease that resolves HJ intermediates. Cleaves cruciform DNA by making single-stranded nicks across the HJ at symmetrical positions within the homologous arms, yielding a 5'-phosphate and a 3'-hydroxyl group; requires a central core of homology in the junction. The consensus cleavage sequence is 5'-(A/T)TT(C/G)-3'. Cleavage occurs on the 3'-side of the TT dinucleotide at the point of strand exchange. HJ branch migration catalyzed by RuvA-RuvB allows RuvC to scan DNA until it finds its consensus sequence, where it cleaves and resolves the cruciform DNA. The chain is Crossover junction endodeoxyribonuclease RuvC from Clavibacter michiganensis subsp. michiganensis (strain NCPPB 382).